The primary structure comprises 217 residues: Adenylate kinase (217 aa).

10–15 (GAGKGT) contacts ATP. An NMP region spans residues 30–59 (STGDIFRSNIKNGTELGRKAKEYIDKGLLV). AMP is bound by residues Thr31, Arg36, 57–59 (LLV), 85–88 (GFPR), and Gln92. An LID region spans residues 126–163 (GRRVCSKCGMSYHIVYNQPKVENICDSCNGELIQRDDD). Arg127 is a binding site for ATP. Positions 130 and 133 each coordinate Zn(2+). 136–137 (SY) contacts ATP. Positions 150 and 153 each coordinate Zn(2+). Arg160 and Arg171 together coordinate AMP. An ATP-binding site is contributed by Glu199.

It belongs to the adenylate kinase family. Monomer.

The protein resides in the cytoplasm. It carries out the reaction AMP + ATP = 2 ADP. Its pathway is purine metabolism; AMP biosynthesis via salvage pathway; AMP from ADP: step 1/1. In terms of biological role, catalyzes the reversible transfer of the terminal phosphate group between ATP and AMP. Plays an important role in cellular energy homeostasis and in adenine nucleotide metabolism. The chain is Adenylate kinase from Acetivibrio thermocellus (strain ATCC 27405 / DSM 1237 / JCM 9322 / NBRC 103400 / NCIMB 10682 / NRRL B-4536 / VPI 7372) (Clostridium thermocellum).